We begin with the raw amino-acid sequence, 340 residues long: N-acetyl-gamma-glutamyl-phosphate reductase (340 aa).

Residue C146 is part of the active site.

This sequence belongs to the NAGSA dehydrogenase family. Type 1 subfamily.

The protein localises to the cytoplasm. It catalyses the reaction N-acetyl-L-glutamate 5-semialdehyde + phosphate + NADP(+) = N-acetyl-L-glutamyl 5-phosphate + NADPH + H(+). The protein operates within amino-acid biosynthesis; L-arginine biosynthesis; N(2)-acetyl-L-ornithine from L-glutamate: step 3/4. In terms of biological role, catalyzes the NADPH-dependent reduction of N-acetyl-5-glutamyl phosphate to yield N-acetyl-L-glutamate 5-semialdehyde. This chain is N-acetyl-gamma-glutamyl-phosphate reductase, found in Streptococcus thermophilus (strain CNRZ 1066).